Reading from the N-terminus, the 514-residue chain is G-protein coupled receptor Mth (514 aa).

Positions 1-24 are cleaved as a signal peptide; that stretch reads MKTLLVLRISTVILVVLVIQKSYA. The Extracellular portion of the chain corresponds to 25-218; it reads DILECDYFDT…CLIVPSITGQ (194 aa). Cystine bridges form between Cys-29/Cys-83, Cys-85/Cys-90, Cys-94/Cys-188, Cys-95/Cys-106, and Cys-150/Cys-209. Asn-45 is a glycosylation site (N-linked (GlcNAc...) asparagine). N-linked (GlcNAc...) asparagine glycosylation is found at Asn-109, Asn-123, Asn-170, and Asn-198. Residues 219 to 239 form a helical membrane-spanning segment; it reads TVVMISSLICMVLTIAVYLFV. Residues 240–248 lie on the Cytoplasmic side of the membrane; it reads KKLQNLHGK. The helical transmembrane segment at 249–269 threads the bilayer; that stretch reads CFICYMVCLFMGYLFLLLDLW. Over 270-278 the chain is Extracellular; sequence QISISFCKP. A helical membrane pass occupies residues 279–299; that stretch reads AGFLGYFFVMAAFFWLSVISL. Residues 300-320 are Cytoplasmic-facing; the sequence is HLWNTFRGSSHKANRFLFEHR. The helical transmembrane segment at 321–341 threads the bilayer; that stretch reads FLAYNTYAWGMAVVLTGITVL. Residues 342–370 lie on the Extracellular side of the membrane; it reads ADNIVENQDWNPRVGHEGHCWIYTQAWSA. The helical transmembrane segment at 371 to 391 threads the bilayer; it reads MLYFYGPMVFLIAFNITMFIL. Over 392–424 the chain is Cytoplasmic; the sequence is TAKRILGVKKDIQNFAHRQERKQKLNSDKQTYT. The helical transmembrane segment at 425–445 threads the bilayer; that stretch reads FFLRLFIIMGLSWSLEIGSYF. At 446 to 454 the chain is on the extracellular side; it reads SQSNQTWAN. The N-linked (GlcNAc...) asparagine glycan is linked to Asn-449. A helical transmembrane segment spans residues 455 to 475; that stretch reads VFLVADYLNWSQGIIIFILFV. Residues 476-514 lie on the Cytoplasmic side of the membrane; it reads LKRSTWRLLQESIRGEGEEVNNSEEEISLENTTTRNVLL.

This sequence belongs to the G-protein coupled receptor 2 family. Mth subfamily. Homodimer.

It localises to the cell membrane. Involved in biological aging and stress response. Essential for adult survival. Required in the presynaptic motor neuron to up-regulate neurotransmitter exocytosis at larval glutamatergic neuromuscular junctions (NMJs). Regulates a step associated with docking and clustering of vesicles at release sites. SP/Acp70A and sun are agonists that activate mth in vitro. This chain is G-protein coupled receptor Mth (mth), found in Drosophila melanogaster (Fruit fly).